Consider the following 40-residue polypeptide: Photosystem II reaction center protein J (40 aa).

A helical membrane pass occupies residues 8 to 28 (IPLWLVGTVTGIPVIGLIGVF).

This sequence belongs to the PsbJ family. PSII is composed of 1 copy each of membrane proteins PsbA, PsbB, PsbC, PsbD, PsbE, PsbF, PsbH, PsbI, PsbJ, PsbK, PsbL, PsbM, PsbT, PsbX, PsbY, PsbZ, Psb30/Ycf12, at least 3 peripheral proteins of the oxygen-evolving complex and a large number of cofactors. It forms dimeric complexes.

Its subcellular location is the plastid. The protein resides in the chloroplast thylakoid membrane. Functionally, one of the components of the core complex of photosystem II (PSII). PSII is a light-driven water:plastoquinone oxidoreductase that uses light energy to abstract electrons from H(2)O, generating O(2) and a proton gradient subsequently used for ATP formation. It consists of a core antenna complex that captures photons, and an electron transfer chain that converts photonic excitation into a charge separation. The sequence is that of Photosystem II reaction center protein J from Musa acuminata (Banana).